An 881-amino-acid polypeptide reads, in one-letter code: Protein translocase subunit SecA (881 aa).

Residues glutamine 83, 101 to 105 (GEGKT), and aspartate 492 each bind ATP.

The protein belongs to the SecA family.

The protein localises to the plastid. The protein resides in the chloroplast stroma. It localises to the chloroplast thylakoid membrane. The enzyme catalyses ATP + H2O + cellular proteinSide 1 = ADP + phosphate + cellular proteinSide 2.. In terms of biological role, has a central role in coupling the hydrolysis of ATP to the transfer of proteins across the thylakoid membrane. The polypeptide is Protein translocase subunit SecA (Emiliania huxleyi (Coccolithophore)).